Consider the following 94-residue polypeptide: FXYD domain-containing ion transport regulator 6 (94 aa).

The signal sequence occupies residues 1 to 17; that stretch reads METVLILCSLLAPVVLA. Topologically, residues 18–34 are extracellular; sequence SAAEKEKEKDPFYYDYQ. The chain crosses the membrane as a helical span at residues 35–57; it reads TLRIGGLVFAVVLFSVGILLILS. The Cytoplasmic portion of the chain corresponds to 58-94; it reads RRCKCSFNQKPRAPGDEEAQVENLITTNAAEPQKAEN.

The protein belongs to the FXYD family. As to quaternary structure, regulatory subunit of the sodium/potassium-transporting ATPase which is composed of a catalytic alpha subunit, a non-catalytic beta subunit and an additional regulatory subunit. The regulatory subunit, a member of the FXYD protein family, modulates the enzymatic activity in a tissue- and isoform-specific way by changing affinities of the Na+/K+-ATPase toward Na(+), K(+) or ATP. As to expression, expressed in the neuronal fibers of the medial part of lateral habenula nucleus, thalamus, hypothalamus, stria terminalis, zona incerta, amygdaloid body and cingulum, olfactory bulb, hippocampus, cerebral cortex and cerebellum. In the cerebellum there is a predominant expression pattern in the granule layer of lobules VI-IX of the posterior lobe. Detected in inner ear.

The protein resides in the cell membrane. Functionally, associates with and regulates the activity of the sodium/potassium-transporting ATPase (NKA) which catalyzes the hydrolysis of ATP coupled with the exchange of Na(+) and K(+) ions across the plasma membrane. Decreases the apparent affinity of the transporter for Na(+). In addition to modulating NKA kinetics, may also function as a regulator of NKA localization to the plasma membrane. In Rattus norvegicus (Rat), this protein is FXYD domain-containing ion transport regulator 6 (Fxyd6).